A 165-amino-acid chain; its full sequence is Large ribosomal subunit protein uL10 (165 aa).

This sequence belongs to the universal ribosomal protein uL10 family. As to quaternary structure, part of the ribosomal stalk of the 50S ribosomal subunit. The N-terminus interacts with L11 and the large rRNA to form the base of the stalk. The C-terminus forms an elongated spine to which L12 dimers bind in a sequential fashion forming a multimeric L10(L12)X complex.

Functionally, forms part of the ribosomal stalk, playing a central role in the interaction of the ribosome with GTP-bound translation factors. The sequence is that of Large ribosomal subunit protein uL10 from Edwardsiella ictaluri (strain 93-146).